The following is a 453-amino-acid chain: DNA repair protein RadA (453 aa).

The segment at 10 to 27 (CQECGYQSPKYLGRCPNC) adopts a C4-type zinc-finger fold. 95–102 (GDPGIGKS) is a binding site for ATP. Residues 251–255 (KNRFG) carry the RadA KNRFG motif motif. A lon-protease-like region spans residues 350–453 (DAYLKSAGGV…VGQVLKAVFS (104 aa)).

It belongs to the RecA family. RadA subfamily.

In terms of biological role, DNA-dependent ATPase involved in processing of recombination intermediates, plays a role in repairing DNA breaks. Stimulates the branch migration of RecA-mediated strand transfer reactions, allowing the 3' invading strand to extend heteroduplex DNA faster. Binds ssDNA in the presence of ADP but not other nucleotides, has ATPase activity that is stimulated by ssDNA and various branched DNA structures, but inhibited by SSB. Does not have RecA's homology-searching function. The sequence is that of DNA repair protein RadA from Streptococcus pyogenes serotype M3 (strain ATCC BAA-595 / MGAS315).